The primary structure comprises 154 residues: Myoglobin (154 aa).

The Globin domain maps to 2-148 (GLSDGEWQMV…FRNDIAAKYK (147 aa)). Phosphoserine is present on residues Ser-4 and Ser-32. Position 65 (His-65) interacts with nitrite. Position 65 (His-65) interacts with O2. Residue Thr-68 is modified to Phosphothreonine. His-94 is a heme b binding site. Phosphoserine occurs at positions 121 and 133.

It belongs to the globin family. As to quaternary structure, monomeric.

Its subcellular location is the cytoplasm. The protein localises to the sarcoplasm. It catalyses the reaction Fe(III)-heme b-[protein] + nitric oxide + H2O = Fe(II)-heme b-[protein] + nitrite + 2 H(+). It carries out the reaction H2O2 + AH2 = A + 2 H2O. In terms of biological role, monomeric heme protein which primary function is to store oxygen and facilitate its diffusion within muscle tissues. Reversibly binds oxygen through a pentacoordinated heme iron and enables its timely and efficient release as needed during periods of heightened demand. Depending on the oxidative conditions of tissues and cells, and in addition to its ability to bind oxygen, it also has a nitrite reductase activity whereby it regulates the production of bioactive nitric oxide. Under stress conditions, like hypoxia and anoxia, it also protects cells against reactive oxygen species thanks to its pseudoperoxidase activity. The chain is Myoglobin from Rattus norvegicus (Rat).